We begin with the raw amino-acid sequence, 259 residues long: Proteasome subunit alpha (259 aa).

Residues 233 to 243 (PAAPAAASESA) show a composition bias toward low complexity. Residues 233–259 (PAAPAAASESAPEPKPDTETKPADPQD) form a disordered region. The span at 244-259 (PEPKPDTETKPADPQD) shows a compositional bias: basic and acidic residues.

The protein belongs to the peptidase T1A family. As to quaternary structure, the 20S proteasome core is composed of 14 alpha and 14 beta subunits that assemble into four stacked heptameric rings, resulting in a barrel-shaped structure. The two inner rings, each composed of seven catalytic beta subunits, are sandwiched by two outer rings, each composed of seven alpha subunits. The catalytic chamber with the active sites is on the inside of the barrel. Has a gated structure, the ends of the cylinder being occluded by the N-termini of the alpha-subunits. Is capped by the proteasome-associated ATPase, ARC.

The protein resides in the cytoplasm. It participates in protein degradation; proteasomal Pup-dependent pathway. Its activity is regulated as follows. The formation of the proteasomal ATPase ARC-20S proteasome complex, likely via the docking of the C-termini of ARC into the intersubunit pockets in the alpha-rings, may trigger opening of the gate for substrate entry. Interconversion between the open-gate and close-gate conformations leads to a dynamic regulation of the 20S proteasome proteolysis activity. Component of the proteasome core, a large protease complex with broad specificity involved in protein degradation. The protein is Proteasome subunit alpha of Rhodococcus opacus (strain B4).